Reading from the N-terminus, the 560-residue chain is Developmental and secondary metabolism regulator veA (560 aa).

Positions 35–241 (GRRLWYRMRV…AEQGCRVRIR (207 aa)) constitute a Velvet domain. Residues 49–54 (ERARAC) carry the Nuclear localization signal motif. 3 disordered regions span residues 49–70 (ERARACGSGPKSSADRRPVDPP), 171–197 (KEDKDKDKERDVESQPPLTGLSPATGG), and 250–560 (DGKG…RLRY). The segment covering 171-183 (KEDKDKDKERDVE) has biased composition (basic and acidic residues). Residues 336–355 (AAPPQPFAQPPSVPASPVYP) show a composition bias toward pro residues. Positions 395–405 (PRRESIHHDYR) are enriched in basic and acidic residues. Pro residues predominate over residues 411-439 (QLPPLPPPPYYPPTPQQSHMPPPQPPQVL). Positions 444–453 (IDSNSKSNNR) are enriched in polar residues. The segment at 455–496 (PMPSPTALANSAPRPLASLAPLAPLMQSTSSSAGKGPVHPAT) is PEST. Residues 461–479 (ALANSAPRPLASLAPLAPL) are compositionally biased toward low complexity. 2 stretches are compositionally biased toward basic and acidic residues: residues 508 to 535 (RAHDESFWSEPEHGRYQNGTRDKGRSED) and 546 to 560 (RRADGTEADGIRLRY).

Belongs to the velvet family. VeA subfamily. As to quaternary structure, component of the heterotrimeric velvet complex composed of laeA, veA and velB; VeA acting as a bridging protein between laeA and velB.

It localises to the nucleus. The protein resides in the cytoplasm. Its function is as follows. Component of the velvet transcription factor complex that controls sexual/asexual developmental ratio in response to light, promoting sexual development in the darkness while stimulating asexual sporulation under illumination. The velvet complex acts as a global regulator for secondary metabolite gene expression. Positively regulates chaetoglobosin A biosynthesis by controlling the expression of core genes of the chaetoglobosin A biosynthetic gene cluster and other relevant regulators in a light-dependent manner. VeA directly regulates transcription factors brlA, laeA, and the chaetoglobosin A cluster-specific transcription regulator cheR. Also directly regulates the expression of one of the chaetoglobosin A cluster cytochrome P450 monooxygenases (cheE or cheG), but only indirectly regulates the expression of the PKS-NRPS hybrid cheA. Moreover, VeA has a significant effect on the asexual spores production, irrespective of light or dark condition. This chain is Developmental and secondary metabolism regulator veA, found in Chaetomium globosum (strain ATCC 6205 / CBS 148.51 / DSM 1962 / NBRC 6347 / NRRL 1970) (Soil fungus).